We begin with the raw amino-acid sequence, 258 residues long: Tryptophan synthase alpha chain (258 aa).

Active-site proton acceptor residues include Glu-47 and Asp-58.

It belongs to the TrpA family. As to quaternary structure, tetramer of two alpha and two beta chains.

The enzyme catalyses (1S,2R)-1-C-(indol-3-yl)glycerol 3-phosphate + L-serine = D-glyceraldehyde 3-phosphate + L-tryptophan + H2O. Its pathway is amino-acid biosynthesis; L-tryptophan biosynthesis; L-tryptophan from chorismate: step 5/5. Functionally, the alpha subunit is responsible for the aldol cleavage of indoleglycerol phosphate to indole and glyceraldehyde 3-phosphate. In Bacillus anthracis (strain CDC 684 / NRRL 3495), this protein is Tryptophan synthase alpha chain.